A 167-amino-acid polypeptide reads, in one-letter code: UPF0225 protein VV1_2912 (167 aa).

This sequence belongs to the UPF0225 family.

The protein is UPF0225 protein VV1_2912 of Vibrio vulnificus (strain CMCP6).